The primary structure comprises 241 residues: Ribosomal RNA small subunit methyltransferase J (241 aa).

S-adenosyl-L-methionine is bound by residues Arg-94–Asp-95 and Asp-163.

The protein belongs to the methyltransferase superfamily. RsmJ family.

The protein resides in the cytoplasm. It catalyses the reaction guanosine(1516) in 16S rRNA + S-adenosyl-L-methionine = N(2)-methylguanosine(1516) in 16S rRNA + S-adenosyl-L-homocysteine + H(+). Specifically methylates the guanosine in position 1516 of 16S rRNA. The protein is Ribosomal RNA small subunit methyltransferase J of Francisella tularensis subsp. novicida (strain U112).